The primary structure comprises 512 residues: Cytochrome P450 82C3 (512 aa).

Residues 1–21 (MDTSLFSLFVSILVFVFIALF) traverse the membrane as a helical segment. Cys451 is a binding site for heme.

It belongs to the cytochrome P450 family. The cofactor is heme.

The protein resides in the membrane. This chain is Cytochrome P450 82C3 (CYP82C3), found in Arabidopsis thaliana (Mouse-ear cress).